A 620-amino-acid polypeptide reads, in one-letter code: Chaperone protein HscA homolog (620 aa).

The protein belongs to the heat shock protein 70 family.

In terms of biological role, chaperone involved in the maturation of iron-sulfur cluster-containing proteins. Has a low intrinsic ATPase activity which is markedly stimulated by HscB. This Janthinobacterium sp. (strain Marseille) (Minibacterium massiliensis) protein is Chaperone protein HscA homolog.